Reading from the N-terminus, the 433-residue chain is Glutamate-1-semialdehyde 2,1-aminomutase (433 aa).

At Lys-266 the chain carries N6-(pyridoxal phosphate)lysine.

The protein belongs to the class-III pyridoxal-phosphate-dependent aminotransferase family. HemL subfamily. As to quaternary structure, homodimer. Requires pyridoxal 5'-phosphate as cofactor.

It is found in the cytoplasm. The enzyme catalyses (S)-4-amino-5-oxopentanoate = 5-aminolevulinate. It participates in porphyrin-containing compound metabolism; protoporphyrin-IX biosynthesis; 5-aminolevulinate from L-glutamyl-tRNA(Glu): step 2/2. The protein is Glutamate-1-semialdehyde 2,1-aminomutase of Psychrobacter arcticus (strain DSM 17307 / VKM B-2377 / 273-4).